The following is a 419-amino-acid chain: ATP phosphoribosyltransferase regulatory subunit (419 aa).

It belongs to the class-II aminoacyl-tRNA synthetase family. HisZ subfamily. As to quaternary structure, heteromultimer composed of HisG and HisZ subunits.

The protein resides in the cytoplasm. The protein operates within amino-acid biosynthesis; L-histidine biosynthesis; L-histidine from 5-phospho-alpha-D-ribose 1-diphosphate: step 1/9. Its function is as follows. Required for the first step of histidine biosynthesis. May allow the feedback regulation of ATP phosphoribosyltransferase activity by histidine. The sequence is that of ATP phosphoribosyltransferase regulatory subunit from Ruminiclostridium cellulolyticum (strain ATCC 35319 / DSM 5812 / JCM 6584 / H10) (Clostridium cellulolyticum).